Here is a 362-residue protein sequence, read N- to C-terminus: ATPase ARSA2 (362 aa).

Residue 27 to 34 (KGGVGKTT) participates in ATP binding. Residue aspartate 58 is part of the active site. Residues glutamate 235 and asparagine 262 each contribute to the ATP site.

The protein belongs to the arsA ATPase family. As to quaternary structure, homodimer. Interacts with SEC61B.

It is found in the cytoplasm. The protein localises to the cytosol. It localises to the endoplasmic reticulum. ATPase required for the post-translational delivery of tail-anchored (TA) proteins to the endoplasmic reticulum. Recognizes and selectively binds the transmembrane domain of TA proteins in the cytosol. This complex then targets to the endoplasmic reticulum by membrane-bound receptors, where the tail-anchored protein is released for insertion. This process is regulated by ATP binding and hydrolysis. ATP binding drives the homodimer towards the closed dimer state, facilitating recognition of newly synthesized TA membrane proteins. ATP hydrolysis is required for insertion. Subsequently, the homodimer reverts towards the open dimer state, lowering its affinity for the membrane-bound receptor, and returning it to the cytosol to initiate a new round of targeting. The sequence is that of ATPase ARSA2 from Chlamydomonas reinhardtii (Chlamydomonas smithii).